The following is a 441-amino-acid chain: Bacteria-responsive protein 1 (441 aa).

Positions methionine 1 to alanine 18 are cleaved as a signal peptide. A glycan (N-linked (GlcNAc...) asparagine) is linked at asparagine 20. Residues proline 25 to leucine 441 enclose the GH18 domain. An intrachain disulfide couples cysteine 29 to cysteine 56. Residue asparagine 225 is glycosylated (N-linked (GlcNAc...) asparagine).

It belongs to the glycosyl hydrolase 18 family. IDGF subfamily. In terms of tissue distribution, salivary gland (at protein level).

It is found in the secreted. Its function is as follows. Promotes recruitment of host neutrophils at the bite site. Induces expression of IL1B and IL6 in the skin of the host. (Microbial infection) Enhances Zika virus replication and exacerbates disease pathogenesis in the host. In Aedes aegypti (Yellowfever mosquito), this protein is Bacteria-responsive protein 1.